The sequence spans 583 residues: MISHVLVKDTSCLKVRTSYKCFVKYFPKCSVQSSFHSYDELAFSRRLYNLPRTLLNSRYYSNHSHGLVHGSKSPPSSQFLVPSFLQFNGQLKALCNNSAFQALPIKLSDLQKHWPSLKPHPLPPKRVSLGIPSISNPPVDTVISDSPTSPHPPSFVQPHPPYGIFAAPILDVRVLTNPGAVKRTYNLCLDISKYPLLEGKDWKIGGSFGIMPPNSDAEVLHLAHLLKIPQHELYVTKVLRTNGGRWPTIWGEDKPRCLYTSLYHIFKWCSDFISKPPTKSLIRLLAEHTLNPVEKSVLLALSDFRQDESYCRICTQSCVTLPDILEAFPSCHPPVDHLISALPQLMPRWYSISNDPSLANKRLEMAFTVQEYHSPNGQSRTGICTGFLEDLALAFLKARHDGSLANKKFTVPMFRGVQQNPFAKEFHNDGPMCLIGAGVGIAPFRGFVQRRLANAACTGKVWIIQGCRDQKLDELYHGEWNTVPGHHKNPKCRAKKLVVESRNGRREYVQDAVRRHGDVIWDVLSHKNGRIYLCGSGNSFVSEIEKALMDVAMKYGKLSKEEAQKELKNWQKPMNCKLIKEVW.

An FAD-binding FR-type domain is found at 162–424 (YGIFAAPILD…RGVQQNPFAK (263 aa)).

Belongs to the flavoprotein pyridine nucleotide cytochrome reductase family. FAD serves as cofactor.

Its subcellular location is the mitochondrion. This is an uncharacterized protein from Schizosaccharomyces pombe (strain 972 / ATCC 24843) (Fission yeast).